Here is a 54-residue protein sequence, read N- to C-terminus: Conotoxin vc5c (54 aa).

Positions 1-14 (VILLLLIASIPSDA) are cleaved as a signal peptide. Residues 15–43 (VQLKTKDDMPLASFHGNARRTLQMLSNKR) constitute a propeptide that is removed on maturation. Glutamate 50 carries the post-translational modification 4-carboxyglutamate. 6'-bromotryptophan is present on tryptophan 51.

The protein belongs to the conotoxin T superfamily. In terms of processing, contains 2 disulfide bonds that can be either 'C1-C3, C2-C4' or 'C1-C4, C2-C3', since these disulfide connectivities have been observed for conotoxins with cysteine framework V (for examples, see AC P0DQQ7 and AC P81755). As to expression, expressed by the venom duct.

It localises to the secreted. In Conus victoriae (Queen Victoria cone), this protein is Conotoxin vc5c.